The sequence spans 155 residues: Ribosome maturation factor RimP (155 aa).

This sequence belongs to the RimP family.

The protein localises to the cytoplasm. Functionally, required for maturation of 30S ribosomal subunits. The polypeptide is Ribosome maturation factor RimP (Listeria monocytogenes serovar 1/2a (strain ATCC BAA-679 / EGD-e)).